A 92-amino-acid polypeptide reads, in one-letter code: Small ribosomal subunit protein bS21 (92 aa).

The interval 37-92 (QREGTFREMKRRNHYEKPSEKKARQKAEAIRRARKLARKRAQREGLIAKRGGTTRR) is disordered. The span at 51 to 67 (YEKPSEKKARQKAEAIR) shows a compositional bias: basic and acidic residues. Positions 68-77 (RARKLARKRA) are enriched in basic residues.

The protein belongs to the bacterial ribosomal protein bS21 family.

This chain is Small ribosomal subunit protein bS21, found in Maricaulis maris (strain MCS10) (Caulobacter maris).